We begin with the raw amino-acid sequence, 968 residues long: RNA polymerase-associated protein RapA (968 aa).

A Helicase ATP-binding domain is found at 164 to 334; it reads DVGRRHAPRV…FARLRLLDPN (171 aa). An ATP-binding site is contributed by 177–184; sequence DEVGLGKT. The DEAH box motif lies at 280 to 283; sequence DEAH. One can recognise a Helicase C-terminal domain in the interval 490–685; sequence RVEWLMGYLT…ALKAQLEQGR (196 aa).

It belongs to the SNF2/RAD54 helicase family. RapA subfamily. As to quaternary structure, interacts with the RNAP. Has a higher affinity for the core RNAP than for the holoenzyme. Its ATPase activity is stimulated by binding to RNAP.

Its function is as follows. Transcription regulator that activates transcription by stimulating RNA polymerase (RNAP) recycling in case of stress conditions such as supercoiled DNA or high salt concentrations. Probably acts by releasing the RNAP, when it is trapped or immobilized on tightly supercoiled DNA. Does not activate transcription on linear DNA. Probably not involved in DNA repair. This is RNA polymerase-associated protein RapA from Salmonella typhimurium (strain LT2 / SGSC1412 / ATCC 700720).